A 179-amino-acid chain; its full sequence is UPF0227 protein Shewmr7_1806 (179 aa).

The protein belongs to the UPF0227 family.

The chain is UPF0227 protein Shewmr7_1806 from Shewanella sp. (strain MR-7).